The primary structure comprises 261 residues: Kallikrein 1-related peptidase b1 (261 aa).

Positions 1 to 18 are cleaved as a signal peptide; sequence MWFLILFLALSLGGIDAA. Positions 19–24 are cleaved as a propeptide — activation peptide; the sequence is PPVQSR. The Peptidase S1 domain occupies 25–258; it reads IVGGFKCEKN…FTSWIKDTLA (234 aa). 5 disulfides stabilise this stretch: Cys-31/Cys-173, Cys-50/Cys-66, Cys-152/Cys-219, Cys-184/Cys-198, and Cys-209/Cys-234. Catalysis depends on His-65, which acts as the Charge relay system. Asn-102 is a glycosylation site (N-linked (GlcNAc...) asparagine). The Charge relay system role is filled by Asp-120. Residue Ser-213 is the Charge relay system of the active site.

Belongs to the peptidase S1 family. Kallikrein subfamily.

It carries out the reaction Preferential cleavage of Arg-|-Xaa bonds in small molecule substrates. Highly selective action to release kallidin (lysyl-bradykinin) from kininogen involves hydrolysis of Met-|-Xaa or Leu-|-Xaa.. Its function is as follows. Glandular kallikreins cleave Met-Lys and Arg-Ser bonds in kininogen to release Lys-bradykinin. This chain is Kallikrein 1-related peptidase b1 (Klk1b1), found in Mus musculus (Mouse).